We begin with the raw amino-acid sequence, 410 residues long: Cysteine desulfurase IscS (410 aa).

Pyridoxal 5'-phosphate contacts are provided by residues 80 to 81 (AT), Asn160, Gln188, and 208 to 210 (SGH). An N6-(pyridoxal phosphate)lysine modification is found at Lys211. Thr248 provides a ligand contact to pyridoxal 5'-phosphate. The Cysteine persulfide intermediate role is filled by Cys334. Cys334 lines the [2Fe-2S] cluster pocket.

The protein belongs to the class-V pyridoxal-phosphate-dependent aminotransferase family. NifS/IscS subfamily. As to quaternary structure, homodimer. Forms a heterotetramer with IscU, interacts with other sulfur acceptors. Pyridoxal 5'-phosphate is required as a cofactor.

It is found in the cytoplasm. The catalysed reaction is (sulfur carrier)-H + L-cysteine = (sulfur carrier)-SH + L-alanine. It functions in the pathway cofactor biosynthesis; iron-sulfur cluster biosynthesis. Master enzyme that delivers sulfur to a number of partners involved in Fe-S cluster assembly, tRNA modification or cofactor biosynthesis. Catalyzes the removal of elemental sulfur atoms from cysteine to produce alanine. Functions as a sulfur delivery protein for Fe-S cluster synthesis onto IscU, an Fe-S scaffold assembly protein, as well as other S acceptor proteins. This is Cysteine desulfurase IscS from Rickettsia africae (strain ESF-5).